Consider the following 228-residue polypeptide: Lipoprotein-releasing system ATP-binding protein LolD (228 aa).

One can recognise an ABC transporter domain in the interval 7–228 (LNCQNLTKDY…MQDGVLRPEM (222 aa)). ATP is bound at residue 43–50 (GSSGSGKS).

This sequence belongs to the ABC transporter superfamily. Lipoprotein translocase (TC 3.A.1.125) family. In terms of assembly, the complex is composed of two ATP-binding proteins (LolD) and two transmembrane proteins (LolC and LolE).

It is found in the cell inner membrane. Functionally, part of the ABC transporter complex LolCDE involved in the translocation of mature outer membrane-directed lipoproteins, from the inner membrane to the periplasmic chaperone, LolA. Responsible for the formation of the LolA-lipoprotein complex in an ATP-dependent manner. In Mannheimia succiniciproducens (strain KCTC 0769BP / MBEL55E), this protein is Lipoprotein-releasing system ATP-binding protein LolD.